The following is a 200-amino-acid chain: uncharacterized protein (200 aa).

A Response regulatory domain is found at arginine 3–valine 119. Aspartate 54 carries the 4-aspartylphosphate modification. Positions methionine 133–glycine 198 constitute an HTH luxR-type domain. A DNA-binding region (H-T-H motif) is located at residues threonine 157 to serine 176.

Phosphorylated by YvfT.

The protein localises to the cytoplasm. Functionally, member of the two-component regulatory system YvfT/YvfU. This is an uncharacterized protein from Bacillus subtilis (strain 168).